The primary structure comprises 779 residues: Mediator of RNA polymerase II transcription subunit 15 (779 aa).

2 stretches are compositionally biased toward polar residues: residues 70–90 (NKNQ…NQQG) and 98–108 (ALQTLATQGTR). Disordered stretches follow at residues 70-131 (NKNQ…GGNA), 209-407 (NPMQ…VPIG), 437-512 (FLRQ…NPQE), and 629-649 (PAKQ…TGSQ). Over residues 114-130 (GQMGPGGPMGNQMGGGN) the composition is skewed to gly residues. Low complexity-rich tracts occupy residues 209–232 (NPMQ…QPQG) and 240–270 (PNQM…QMNQ). The segment covering 274–284 (SSGGNQMGNLG) has biased composition (gly residues). Composition is skewed to low complexity over residues 285-295 (GNSPMNPGNMG), 304-329 (QQMP…QMNQ), and 339-350 (GPVQQQQQPGQV). Residues 351–361 (GMAGMGPGGPG) show a composition bias toward gly residues. 3 stretches are compositionally biased toward low complexity: residues 362–383 (NLQQ…APGQ), 393–402 (NMQAMGNQGN), and 451–468 (GPGS…IPSP). 2 stretches are compositionally biased toward polar residues: residues 477–500 (QVSS…NTPG) and 640–649 (PSTSGSTGSQ).

Belongs to the Mediator complex subunit 15 family. As to quaternary structure, component of the Mediator complex.

It localises to the nucleus. Its function is as follows. Component of the Mediator complex, a coactivator involved in the regulated transcription of nearly all RNA polymerase II-dependent genes. Mediator functions as a bridge to convey information from gene-specific regulatory proteins to the basal RNA polymerase II transcription machinery. Mediator is recruited to promoters by direct interactions with regulatory proteins and serves as a scaffold for the assembly of a functional preinitiation complex with RNA polymerase II and the general transcription factors. This chain is Mediator of RNA polymerase II transcription subunit 15 (MED15), found in Aedes aegypti (Yellowfever mosquito).